The following is a 360-amino-acid chain: Vitopine synthase (360 aa).

Belongs to the lysopine/nopaline/octopine/opine/vitopine dehydrogenases family.

The protein is Vitopine synthase (vis) of Allorhizobium ampelinum (strain ATCC BAA-846 / DSM 112012 / S4) (Agrobacterium vitis (strain S4)).